We begin with the raw amino-acid sequence, 302 residues long: MKDMNQTSLAVEPSRAVVGALWMVLAGIAFSLLNVVTQWLTMKLAFPSASAAFWQYGFAFLFSLPFLKRLGLAAMRTHYPWRHLTRVVLAALGVEAWVAGLAAVPIWQAIALVMTSPFFIILGARLFLGERVGPARWAATAAGFTGAMIILQPWSDGIGWAALLPVLSALLWGASSLITKSLTGIERPETITVWLLVLLTPINGGLALAAGFAVPTGATLALFLLAGLLTAVAQYFLTLAYAAADAAYVQPFDDLKLPLNVLAGWLFFGYAPAGYLWLGAALILSASLFIMRNEMRRERKPA.

Transmembrane regions (helical) follow at residues 16–36 (AVVG…LNVV), 44–64 (LAFP…LFSL), 87–107 (VVLA…VPIW), 109–129 (AIAL…LFLG), 158–178 (IGWA…SSLI), 191–213 (ITVW…AGFA), 227–247 (GLLT…ADAA), and 264–284 (GWLF…ALIL). 2 EamA domains span residues 30–151 (FSLL…MIIL) and 170–291 (LLWG…LFIM).

Belongs to the drug/metabolite transporter (DMT) superfamily. 10 TMS drug/metabolite exporter (DME) (TC 2.A.7.3) family.

It is found in the cell membrane. Its function is as follows. Transports riboflavin into the cell. Can also transport FMN and FAD. Required for normal nodule development during colonization of pea plant roots. The protein is Riboflavin transporter of Rhizobium johnstonii (strain DSM 114642 / LMG 32736 / 3841) (Rhizobium leguminosarum bv. viciae).